Reading from the N-terminus, the 1111-residue chain is Protein STU1 (1111 aa).

HEAT repeat units follow at residues 95–133 (ALPLIVEKLGDQKEKFRQLASQALATLYKVAPVEVERSV) and 167–205 (YVPTMMELLEDADGMVRDVAKSTVIELFRNAPGPAKSDL). 2 disordered regions span residues 225–245 (ELNPTSSAPASQPDPESVEPS) and 476–751 (RLLQ…VDEE). The span at 502-511 (SKSTMGTSKP) shows a compositional bias: polar residues. A compositionally biased stretch (basic and acidic residues) spans 704–714 (PREEQRFVKPV).

Belongs to the CLASP family. As to quaternary structure, interacts with microtubules.

Its subcellular location is the cytoplasm. It is found in the cytoskeleton. It localises to the nucleus. The protein localises to the spindle. In terms of biological role, microtubule binding protein that promotes the stabilization of dynamic microtubules. Required for mitotic spindle formation. The chain is Protein STU1 (STU1) from Chaetomium globosum (strain ATCC 6205 / CBS 148.51 / DSM 1962 / NBRC 6347 / NRRL 1970) (Soil fungus).